We begin with the raw amino-acid sequence, 128 residues long: Aspartate 1-decarboxylase (128 aa).

The active-site Schiff-base intermediate with substrate; via pyruvic acid is Ser-25. Ser-25 bears the Pyruvic acid (Ser) mark. Residue Thr-57 participates in substrate binding. The active-site Proton donor is the Tyr-58. 73–75 serves as a coordination point for substrate; that stretch reads GAA.

Belongs to the PanD family. As to quaternary structure, heterooctamer of four alpha and four beta subunits. The cofactor is pyruvate. In terms of processing, is synthesized initially as an inactive proenzyme, which is activated by self-cleavage at a specific serine bond to produce a beta-subunit with a hydroxyl group at its C-terminus and an alpha-subunit with a pyruvoyl group at its N-terminus.

Its subcellular location is the cytoplasm. The enzyme catalyses L-aspartate + H(+) = beta-alanine + CO2. It participates in cofactor biosynthesis; (R)-pantothenate biosynthesis; beta-alanine from L-aspartate: step 1/1. In terms of biological role, catalyzes the pyruvoyl-dependent decarboxylation of aspartate to produce beta-alanine. The sequence is that of Aspartate 1-decarboxylase from Chlorobium limicola (strain DSM 245 / NBRC 103803 / 6330).